The following is a 104-amino-acid chain: UPF0145 protein RD1_2695 (104 aa).

The protein belongs to the UPF0145 family.

The chain is UPF0145 protein RD1_2695 from Roseobacter denitrificans (strain ATCC 33942 / OCh 114) (Erythrobacter sp. (strain OCh 114)).